Reading from the N-terminus, the 671-residue chain is NADPH--cytochrome P450 reductase (671 aa).

Residues 1–14 (MSAEHVEEVVSEEP) are Lumenal-facing. Residues 15–35 (FLGTLDIALLVVLLVGATWYF) traverse the membrane as a helical segment. At 36–671 (MRSRKKEEAP…QKRYSADVWS (636 aa)) the chain is on the cytoplasmic side. Positions 77-221 (LVVFYGSQTG…DFITWKDRFW (145 aa)) constitute a Flavodoxin-like domain. Residues 83–88 (SQTGTA), 135–138 (ATYG), 170–179 (LGNKTYEHYN), and D205 each bind FMN. One can recognise an FAD-binding FR-type domain in the interval 276 to 515 (KNPFLASVIV…FIRKSQFRLP (240 aa)). NADP(+) is bound at residue R295. FAD is bound by residues 451–454 (RYYS), 469–471 (TAV), Y475, and 485–488 (GVAT). Residues T529, 589–590 (SR), 595–599 (KIYVT), and D632 each bind NADP(+). An FAD-binding site is contributed by W670.

It belongs to the NADPH--cytochrome P450 reductase family. This sequence in the N-terminal section; belongs to the flavodoxin family. The protein in the C-terminal section; belongs to the flavoprotein pyridine nucleotide cytochrome reductase family. The cofactor is FAD. It depends on FMN as a cofactor.

Its subcellular location is the endoplasmic reticulum membrane. The catalysed reaction is 2 oxidized [cytochrome P450] + NADPH = 2 reduced [cytochrome P450] + NADP(+) + H(+). In terms of biological role, this enzyme is required for electron transfer from NADP to cytochrome P450 in microsomes. It can also provide electron transfer to heme oxygenase and cytochrome B5. This Musca domestica (House fly) protein is NADPH--cytochrome P450 reductase.